The primary structure comprises 257 residues: Homeobox protein goosecoid (257 aa).

Positions 160 to 219 (KRRHRTIFTDEQLEALENLFQETKYPDVGTREQLARKVHLREEKVEVWFKNRRAKWRRQK) form a DNA-binding region, homeobox. The interval 213–257 (AKWRRQKRSSSEESENAEKWNKTSSSKASPEKREEEGKSDLDSDS) is disordered. Residues 241 to 257 (SPEKREEEGKSDLDSDS) are compositionally biased toward basic and acidic residues.

It belongs to the paired homeobox family. Bicoid subfamily.

The protein localises to the nucleus. Functionally, regulates chordin (CHRD). May play a role in spatial programing within discrete embryonic fields or lineage compartments during organogenesis. In concert with NKX3-2, plays a role in defining the structural components of the middle ear; required for the development of the entire tympanic ring. Probably involved in the regulatory networks that define neural crest cell fate specification and determine mesoderm cell lineages in mammals. The chain is Homeobox protein goosecoid (GSC) from Homo sapiens (Human).